We begin with the raw amino-acid sequence, 166 residues long: MTYIDPTHLDLEDRVVSINRVTKVVKGGRRLRFAAIVIVGDKNGHVGFGTGKAQEVPEAIRKAVEDAKKNLINVPKVGTTLPHEVIGRFGAGRVLLKPAVEGSGIAAGGAVRAVMELAGIDDVTSKTLGSKTAINVIRATIDGLTRMKTAEQIAELRNISVESLQN.

The S5 DRBM domain occupies 11 to 74 (LEDRVVSINR…EDAKKNLINV (64 aa)).

This sequence belongs to the universal ribosomal protein uS5 family. As to quaternary structure, part of the 30S ribosomal subunit. Contacts proteins S4 and S8.

Its function is as follows. With S4 and S12 plays an important role in translational accuracy. Functionally, located at the back of the 30S subunit body where it stabilizes the conformation of the head with respect to the body. This chain is Small ribosomal subunit protein uS5, found in Latilactobacillus sakei subsp. sakei (strain 23K) (Lactobacillus sakei subsp. sakei).